A 338-amino-acid polypeptide reads, in one-letter code: MSRRAKKDDFLRHYTVSDPRTHPKGYTEYKVTAQFISKKDPEDIKEVVVWKRYSDFRKLHGDLAYTHRNLFRRLEEFPAFPRAQVFGRFEASVIEERRKGAEDLLRFTVPIPALNNSPQLKEFFRGGEVTRPSEVSRDLQILPPPLIPTPPSDEARLLQPLPAERRGQEELEVPVDPLPSSPAQEALDLLFCCDSTEEASSSPARGPLSEAELALFDPYSKEESTGPSPTHTSELAAMEVQSKRLDQEPWEPGGREEEEAEDGDPAPAYLGQATELITQALRNEKAGAYAAALQGYQEGVHILLQGVSGDPSPTRREGVKKKAAEYLKRAETLHAHLP.

The region spanning 1-131 (MSRRAKKDDF…EFFRGGEVTR (131 aa)) is the PX domain. Arg-52, Ser-54, Arg-88, and Arg-97 together coordinate a 1,2-diacyl-sn-glycero-3-phospho-(1D-myo-inositol-3-phosphate). Arg-106 bears the Omega-N-methylarginine mark. Positions 134-155 (EVSRDLQILPPPLIPTPPSDEA) are disordered. The segment covering 142–151 (LPPPLIPTPP) has biased composition (pro residues). Phosphoserine occurs at positions 202 and 228. The interval 240 to 270 (VQSKRLDQEPWEPGGREEEEAEDGDPAPAYL) is disordered. The MIT domain maps to 266 to 338 (APAYLGQATE…RAETLHAHLP (73 aa)).

Belongs to the sorting nexin family. As to quaternary structure, homodimer. Interacts with SNX1, SNX2 and SNX4.

The protein localises to the cytoplasm. Its subcellular location is the membrane. It localises to the cytoplasmic vesicle membrane. Its function is as follows. May be involved in several stages of intracellular trafficking. Overexpression of SNX15 disrupts the normal trafficking of proteins from the plasma membrane to recycling endosomes or the TGN. In Rattus norvegicus (Rat), this protein is Sorting nexin-15 (Snx15).